The following is a 387-amino-acid chain: Succinate--CoA ligase [ADP-forming] subunit beta (387 aa).

The region spanning 9–245 is the ATP-grasp domain; the sequence is KDLLESYGLK…KSQENAKELK (237 aa). Residues Lys-46, 53–55, Glu-100, Tyr-103, and Glu-108 contribute to the ATP site; that span reads GRG. Mg(2+) is bound by residues Asn-200 and Asp-214. Substrate is bound by residues Asn-265 and 322 to 324; that span reads GIV.

The protein belongs to the succinate/malate CoA ligase beta subunit family. In terms of assembly, heterotetramer of two alpha and two beta subunits. Mg(2+) serves as cofactor.

The enzyme catalyses succinate + ATP + CoA = succinyl-CoA + ADP + phosphate. It carries out the reaction GTP + succinate + CoA = succinyl-CoA + GDP + phosphate. It participates in carbohydrate metabolism; tricarboxylic acid cycle; succinate from succinyl-CoA (ligase route): step 1/1. Functionally, succinyl-CoA synthetase functions in the citric acid cycle (TCA), coupling the hydrolysis of succinyl-CoA to the synthesis of either ATP or GTP and thus represents the only step of substrate-level phosphorylation in the TCA. The beta subunit provides nucleotide specificity of the enzyme and binds the substrate succinate, while the binding sites for coenzyme A and phosphate are found in the alpha subunit. The chain is Succinate--CoA ligase [ADP-forming] subunit beta from Francisella tularensis subsp. holarctica (strain OSU18).